The following is a 328-amino-acid chain: MQDDTSSEQNPTHCSAINSSVPLVQGALPTLTLSGKIRVTVTFFLFLVSTTLNASFLLKLQKWTQKKEKGKKLSRMKVLLKHLTLANLLETLIVMPLDGMWNITVQWYAGELLCKILSYLKLFSMYAPAFMMVVISLDRSMAITRPLPVQSNRKLEQSMTGLAWGLSSVLAGPQLYIFKMIHLENGPGQTEVFSQCVTHCSFPQWWHQAFYNFFTFICLFIIPLLIMLICNAKIIFTLTQVLQQDSNKLQLNQSKNNIPRARLRTLKMTVAFAASFIVCWTPYYVLGLWYWFDPGMLHRMSEPVNHFFFLFAFLNPCFDPLIYGYFSL.

At 1 to 38 (MQDDTSSEQNPTHCSAINSSVPLVQGALPTLTLSGKIR) the chain is on the extracellular side. N-linked (GlcNAc...) asparagine glycosylation is present at asparagine 18. The helical transmembrane segment at 39–59 (VTVTFFLFLVSTTLNASFLLK) threads the bilayer. The Cytoplasmic segment spans residues 60 to 84 (LQKWTQKKEKGKKLSRMKVLLKHLT). Residues 85–105 (LANLLETLIVMPLDGMWNITV) traverse the membrane as a helical segment. The Extracellular segment spans residues 106–115 (QWYAGELLCK). A disulfide bridge connects residues cysteine 114 and cysteine 196. A helical membrane pass occupies residues 116–136 (ILSYLKLFSMYAPAFMMVVIS). The Cytoplasmic portion of the chain corresponds to 137 to 160 (LDRSMAITRPLPVQSNRKLEQSMT). A helical transmembrane segment spans residues 161-181 (GLAWGLSSVLAGPQLYIFKMI). Residues 182–208 (HLENGPGQTEVFSQCVTHCSFPQWWHQ) are Extracellular-facing. Residues 209-229 (AFYNFFTFICLFIIPLLIMLI) traverse the membrane as a helical segment. At 230–271 (CNAKIIFTLTQVLQQDSNKLQLNQSKNNIPRARLRTLKMTVA) the chain is on the cytoplasmic side. Residues 272 to 292 (FAASFIVCWTPYYVLGLWYWF) traverse the membrane as a helical segment. The Extracellular portion of the chain corresponds to 293-306 (DPGMLHRMSEPVNH). The chain crosses the membrane as a helical span at residues 307–327 (FFFLFAFLNPCFDPLIYGYFS). Residue leucine 328 is a topological domain, cytoplasmic.

It belongs to the G-protein coupled receptor 1 family.

It is found in the cell membrane. Its function is as follows. Receptor for gonadotropin releasing hormone (GnRH) that mediates the action of GnRH to stimulate the secretion of the gonadotropic hormones luteinizing hormone (LH) and follicle-stimulating hormone (FSH). This receptor mediates its action by association with G-proteins that activate a phosphatidylinositol-calcium second messenger system. In Cavia porcellus (Guinea pig), this protein is Gonadotropin-releasing hormone receptor (GNRHR).